The following is a 495-amino-acid chain: Putative aldehyde dehydrogenase AldA (495 aa).

Position 212–218 (212–218 (GKGSESG)) interacts with NAD(+). Active-site residues include E256 and C290.

Belongs to the aldehyde dehydrogenase family.

The catalysed reaction is an aldehyde + NAD(+) + H2O = a carboxylate + NADH + 2 H(+). The polypeptide is Putative aldehyde dehydrogenase AldA (aldA) (Staphylococcus aureus (strain Mu50 / ATCC 700699)).